The primary structure comprises 428 residues: MKLITNKQGLVGEITVPGDKSMSHRSIMFGAIAEGKTVIRHFLRADDCLGTIKAFKALGVKIEETDEEIIVHGTGSDGLKQAEGPLDIGNSGTTIRLMMGILAGRDFDTVILGDESIAKRPMNRVMLPLQEMGAKMHGKDGSEFAPISIIGNQSLKRMEYHMPVASAQVKSAIIFAALQAEGETIIHEKEKTRDHTEHMIRQFGGEIEMDGLTIRVKGGQKFIGQEMTVPGDVSSAAFFIVAGLITPGSEIELTHVGLNPTRTGIFDVVEQMGGSLVVKDSSRSTGKLAGTVVVKSSELKGTEIGGDIIPRLIDEIPVIALLATQAEGTTIIKDAAELKVKETNRIDAVANELNKMGADITPTEDGLIIRGKTPLHAANVTSYGDHRIGMMLQIAALLVEDGDVELDRAEAVSVSYPTFFEDIRSLLK.

Residues lysine 20, serine 21, and arginine 25 each coordinate 3-phosphoshikimate. Residue lysine 20 participates in phosphoenolpyruvate binding. 2 residues coordinate phosphoenolpyruvate: glycine 92 and arginine 120. Residues serine 166, glutamine 168, aspartate 314, and lysine 341 each coordinate 3-phosphoshikimate. Glutamine 168 is a phosphoenolpyruvate binding site. Aspartate 314 serves as the catalytic Proton acceptor. Phosphoenolpyruvate contacts are provided by arginine 345 and arginine 387.

This sequence belongs to the EPSP synthase family. Monomer.

It is found in the cytoplasm. The enzyme catalyses 3-phosphoshikimate + phosphoenolpyruvate = 5-O-(1-carboxyvinyl)-3-phosphoshikimate + phosphate. It functions in the pathway metabolic intermediate biosynthesis; chorismate biosynthesis; chorismate from D-erythrose 4-phosphate and phosphoenolpyruvate: step 6/7. Its function is as follows. Catalyzes the transfer of the enolpyruvyl moiety of phosphoenolpyruvate (PEP) to the 5-hydroxyl of shikimate-3-phosphate (S3P) to produce enolpyruvyl shikimate-3-phosphate and inorganic phosphate. This chain is 3-phosphoshikimate 1-carboxyvinyltransferase, found in Listeria innocua serovar 6a (strain ATCC BAA-680 / CLIP 11262).